Consider the following 610-residue polypeptide: UvrABC system protein C (610 aa).

One can recognise a GIY-YIG domain in the interval 16 to 94 (SQPGVYRMYD…IKLYQPRYNV (79 aa)). A UVR domain is found at 204-239 (DQVLTQLIARMEKASQDLAFEEAARIRDQIQAVRRV).

It belongs to the UvrC family. Interacts with UvrB in an incision complex.

It is found in the cytoplasm. Its function is as follows. The UvrABC repair system catalyzes the recognition and processing of DNA lesions. UvrC both incises the 5' and 3' sides of the lesion. The N-terminal half is responsible for the 3' incision and the C-terminal half is responsible for the 5' incision. The sequence is that of UvrABC system protein C from Salmonella enteritidis PT4 (strain P125109).